The following is a 443-amino-acid chain: MSKTYHFIGIKGAGMSALALLLHQMGHKVQGSDVEKYYFTQRGLEQAGITILPFSEDNISPDMELIAGNAFREDNNSEVAYAMRHQLPFKRYHEFLGEFMKQFTSLGVAGAHGKTSTTGLLSHVLKHMAATSYLIGDGTGHGAADARYFVFESDEYERHFMPYHPEYSIITNIDFDHPDYFTGLDDVFNAFNDYAKQVKKALFVYGEDEELRKISSPAPIYYYGFEDTDDFVAFDITRTTNGSDFKVRHHHKLIGQFHLPAYGRHNILNATAVIANLFIAGFDMKLVAEHLKSFSGVKRRFTEKVINDTIIIDDFAHHPTEIIATLDAARQKYPNKEIIAIFQPHTFTRTIALLDDFAHALNEADSVYLAPIYGSAREIDKGDVKVEDLAAKVERPAKVISVDNVSPLLDHDNAVYVFMGAGDIQLYERSFEELLANLTKNNQ.

110-116 (GAHGKTS) provides a ligand contact to ATP.

It belongs to the MurCDEF family.

It localises to the cytoplasm. The catalysed reaction is UDP-N-acetyl-alpha-D-muramate + L-alanine + ATP = UDP-N-acetyl-alpha-D-muramoyl-L-alanine + ADP + phosphate + H(+). It participates in cell wall biogenesis; peptidoglycan biosynthesis. Cell wall formation. In Streptococcus equi subsp. zooepidemicus (strain H70), this protein is UDP-N-acetylmuramate--L-alanine ligase.